The sequence spans 299 residues: B-box zinc finger protein 22 (299 aa).

Zn(2+) is bound by residues Cys5, Cys8, Cys28, His33, Cys57, Cys60, Cys80, and His85. The segment at 5-47 (CNVCEAAEATVLCCADEAALCWACDEKIHAANKLAGKHQRVPL) adopts a B box-type 1; atypical zinc-finger fold. A B box-type 2; atypical zinc finger spans residues 57–99 (CDICQEASGFFFCLQDRALLCRKCDVAIHTVNPHVSAHQRFLL). Disordered stretches follow at residues 143-181 (FDHH…GSTT) and 206-299 (ENNG…RRRF). Polar residues-rich tracts occupy residues 164 to 181 (VNDQ…GSTT), 251 to 260 (QIQSPPTASG), and 277 to 290 (ITSS…SPNQ).

Interacts with HY5. Ubiquitinated by COP1 in vitro. COP1-mediated degradation of BBX22 by the proteasome occurs in the dark and is important for a precise skotomorphogenesis process and optimization of seedling growth under short days conditions.

The protein resides in the nucleus. Acts as a positive regulator of seedling photomorphogenesis and light-regulated inhibition of hypocotyl elongation, independently and in concert with HY5 and BBX21. Acts as a positive regulator of de-etiolation and influences chloroplast biogenesis and function through regulation of genes encoding chloroplast proteins. Acts downstream of COP1 and plays an important role in early and long-term adjustment of the shade avoidance syndrome (SAS) responses in natural environments. Regulates the expression of genes responsive to light hormone signals which may contribute to optimal seedling development. This chain is B-box zinc finger protein 22, found in Arabidopsis thaliana (Mouse-ear cress).